Consider the following 89-residue polypeptide: UPF0237 protein LMOf2365_0562 (89 aa).

Residues 4 to 78 (VLTVIGKDNV…EDLQVKIHIQ (75 aa)) enclose the ACT domain.

Belongs to the UPF0237 family.

The chain is UPF0237 protein LMOf2365_0562 from Listeria monocytogenes serotype 4b (strain F2365).